The following is a 1274-amino-acid chain: RNA-directed RNA polymerase VP2 (1274 aa).

Positions 561 to 798 (LSTTSGSVVT…KLYALMGCRI (238 aa)) constitute a RdRp catalytic domain.

The protein belongs to the reoviridae RNA-directed RNA polymerase family.

It localises to the virion. The catalysed reaction is RNA(n) + a ribonucleoside 5'-triphosphate = RNA(n+1) + diphosphate. Its function is as follows. RNA-directed RNA polymerase that is involved in transcription and genome replication. Following infection, it catalyzes the synthesis of fully conservative plus strands. After core assembly, which consists in recruitment of one capped plus-strand for each genomic segments and polymerase complexes, the polymerase switches mode and catalyzes the synthesis of complementary minus-strands. The protein is RNA-directed RNA polymerase VP2 (S2) of Aquareovirus C (isolate Golden shiner/USA/GSRV/1977) (AQRV-C).